The primary structure comprises 209 residues: GTP-binding protein RHB1 (209 aa).

Position 1 is an N-acetylmethionine (M1). G28, K29, T30, T31, V42, Y45, T48, D132, and A172 together coordinate GTP. Residue T30 coordinates Mg(2+). The Effector region motif lies at 45 to 53 (YYPTIENEF). T48 contributes to the Mg(2+) binding site. C206 carries the cysteine methyl ester modification. A lipid anchor (S-farnesyl cysteine) is attached at C206. The propeptide at 207–209 (SIM) is removed in mature form.

It belongs to the small GTPase superfamily. Rheb family. In terms of assembly, interacts with BTN2.

Its subcellular location is the cell membrane. The catalysed reaction is GTP + H2O = GDP + phosphate + H(+). Functionally, binds GTP and exhibits intrinsic GTPase activity. Involved in the regulation of arginine and lysine uptake. Acts through the CAN1 permease. In Saccharomyces cerevisiae (strain ATCC 204508 / S288c) (Baker's yeast), this protein is GTP-binding protein RHB1 (RHB1).